The primary structure comprises 393 residues: Dihydrolipoyllysine-residue succinyltransferase component of 2-oxoglutarate dehydrogenase complex (393 aa).

Residues 3–78 form the Lipoyl-binding domain; sequence RINILVPDLP…KSNQILGNIV (76 aa). Lys44 is subject to N6-lipoyllysine. Catalysis depends on residues His364 and Asp368.

Belongs to the 2-oxoacid dehydrogenase family. As to quaternary structure, forms a 24-polypeptide structural core with octahedral symmetry. Part of the 2-oxoglutarate dehydrogenase (OGDH) complex composed of E1 (2-oxoglutarate dehydrogenase), E2 (dihydrolipoamide succinyltransferase) and E3 (dihydrolipoamide dehydrogenase); the complex contains multiple copies of the three enzymatic components (E1, E2 and E3). The cofactor is (R)-lipoate.

It catalyses the reaction N(6)-[(R)-dihydrolipoyl]-L-lysyl-[protein] + succinyl-CoA = N(6)-[(R)-S(8)-succinyldihydrolipoyl]-L-lysyl-[protein] + CoA. The protein operates within amino-acid degradation; L-lysine degradation via saccharopine pathway; glutaryl-CoA from L-lysine: step 6/6. In terms of biological role, E2 component of the 2-oxoglutarate dehydrogenase (OGDH) complex which catalyzes the second step in the conversion of 2-oxoglutarate to succinyl-CoA and CO(2). This is Dihydrolipoyllysine-residue succinyltransferase component of 2-oxoglutarate dehydrogenase complex (sucB) from Buchnera aphidicola subsp. Schizaphis graminum (strain Sg).